The sequence spans 501 residues: Cytochrome P450 90A4 (501 aa).

Residues 2 to 22 traverse the membrane as a helical segment; the sequence is AAAALLLLAAAAAAVVVAMAL. Cys-446 provides a ligand contact to heme.

It belongs to the cytochrome P450 family. Requires heme as cofactor.

The protein resides in the membrane. The protein operates within plant hormone biosynthesis; brassinosteroid biosynthesis. Its function is as follows. Catalyzes the C23-alpha-hydroxylation step in brassinosteroid biosynthesis. Converts 6-deoxocathasterone to 6-deoxoteasterone in the late C6-oxidation pathway and cathasterone to teasterone (TE) in the early C6-oxidation pathway of brassinolide (BL) biosynthesis. This chain is Cytochrome P450 90A4, found in Oryza sativa subsp. indica (Rice).